Reading from the N-terminus, the 255-residue chain is ATP synthase subunit a (255 aa).

Transmembrane regions (helical) follow at residues 40–60, 109–129, 135–155, 163–183, 196–218, and 230–250; these read TEPI…ASEV, LIGG…IPGV, NLNI…YYGL, VAHL…IEVI, LMLN…ALFV, and IVVQ…LATE.

The protein belongs to the ATPase A chain family. F-type ATPases have 2 components, CF(1) - the catalytic core - and CF(0) - the membrane proton channel. CF(1) has five subunits: alpha(3), beta(3), gamma(1), delta(1), epsilon(1). CF(0) has three main subunits: a(1), b(2) and c(9-12). The alpha and beta chains form an alternating ring which encloses part of the gamma chain. CF(1) is attached to CF(0) by a central stalk formed by the gamma and epsilon chains, while a peripheral stalk is formed by the delta and b chains.

It localises to the cell inner membrane. Its function is as follows. Key component of the proton channel; it plays a direct role in the translocation of protons across the membrane. This chain is ATP synthase subunit a, found in Sorangium cellulosum (strain So ce56) (Polyangium cellulosum (strain So ce56)).